We begin with the raw amino-acid sequence, 337 residues long: UPF0284 protein AF_0276 (337 aa).

The protein belongs to the UPF0284 family.

This Archaeoglobus fulgidus (strain ATCC 49558 / DSM 4304 / JCM 9628 / NBRC 100126 / VC-16) protein is UPF0284 protein AF_0276.